Here is a 112-residue protein sequence, read N- to C-terminus: Probable small nuclear ribonucleoprotein Sm D2 (112 aa).

A compositionally biased stretch (basic and acidic residues) spans 1–15 (MSRMNDETMEDKPDD). The tract at residues 1–23 (MSRMNDETMEDKPDDSNGPLSIL) is disordered. A Sm domain is found at 20–106 (LSILMDSVNN…VILVLKNPLG (87 aa)).

Belongs to the snRNP core protein family.

The protein localises to the nucleus. Its subcellular location is the cytoplasm. It is found in the cytosol. In terms of biological role, plays a role in pre-mRNA splicing as a core component of the spliceosomal U1, U2, U4 and U5 small nuclear ribonucleoproteins (snRNPs), the building blocks of the spliceosome. In Dictyostelium discoideum (Social amoeba), this protein is Probable small nuclear ribonucleoprotein Sm D2 (snrpd2).